Here is a 320-residue protein sequence, read N- to C-terminus: tRNA(Ile)-lysidine synthase, chloroplastic (320 aa).

An ATP-binding site is contributed by 31-36; sequence SGGKDS.

It belongs to the tRNA(Ile)-lysidine synthase family.

Its subcellular location is the plastid. The protein localises to the chloroplast. It catalyses the reaction cytidine(34) in tRNA(Ile2) + L-lysine + ATP = lysidine(34) in tRNA(Ile2) + AMP + diphosphate + H(+). Its function is as follows. Ligates lysine onto the cytidine present at position 34 of the AUA codon-specific tRNA(Ile) that contains the anticodon CAU, in an ATP-dependent manner. Cytidine is converted to lysidine, thus changing the amino acid specificity of the tRNA from methionine to isoleucine. The protein is tRNA(Ile)-lysidine synthase, chloroplastic of Gracilaria tenuistipitata var. liui (Red alga).